A 1413-amino-acid polypeptide reads, in one-letter code: ABC-type transporter vrcC (1413 aa).

One can recognise an ABC transporter 1 domain in the interval 108–365; that stretch reads VWFEALALAR…FLDMGFACPE (258 aa). Asn289 carries an N-linked (GlcNAc...) asparagine glycan. A helical membrane pass occupies residues 476–496; the sequence is VTISSLIGNVITALVIASIFY. N-linked (GlcNAc...) asparagine glycosylation occurs at Asn501. Transmembrane regions (helical) follow at residues 510-530 and 564-584; these read ALLF…MLTL and VLNA…VLLG. Asn675 carries N-linked (GlcNAc...) asparagine glycosylation. Residues 683–703 traverse the membrane as a helical segment; it reads IGIILAFMVVLGAIYLVATDF. The disordered stretch occupies residues 725 to 748; it reads SGKPDDFEGGSDRNASQEKSKSDR. A glycan (N-linked (GlcNAc...) asparagine) is linked at Asn738. Residues 739–748 show a composition bias toward basic and acidic residues; the sequence is ASQEKSKSDR. In terms of domain architecture, ABC transporter 2 spans 761–1003; that stretch reads FQWQDVCFDI…ILIDYFVRNG (243 aa). 6 consecutive transmembrane segments (helical) span residues 1105–1125, 1142–1162, 1191–1211, 1230–1250, 1266–1286, and 1290–1310; these read IYIY…GFSL, IFLL…HFVT, LFWN…PIGM, LLIW…IAAL, LCLL…FWIF, and VSPF…DTTV. Asn1324 carries N-linked (GlcNAc...) asparagine glycosylation. Residues 1378-1398 form a helical membrane-spanning segment; sequence FGLMWVFIFTNIVAACLLYWW.

This sequence belongs to the ABC transporter superfamily. ABCG family. PDR (TC 3.A.1.205) subfamily.

The protein localises to the cell membrane. ABC-type transporter; part of the gene cluster that mediates the biosynthesis of the sesterterpene variecolin. VrcC is probably involved in the secretion of variecolin. This Aspergillus aculeatus (strain ATCC 16872 / CBS 172.66 / WB 5094) protein is ABC-type transporter vrcC.